The following is a 134-amino-acid chain: MPADLSGTWTLLSSDNFEGYMLALGIDFATRKIAKLLKPQKVIEQNGDSFTIHTNSSLRNYFVKFKVGEEFDEDNRGLDNRKCKSLVIWDNDRLTCIQKGEKKNRGWTHWIEGDKLHLEMFCEGQVCKQTFQRA.

Belongs to the calycin superfamily. Fatty-acid binding protein (FABP) family. Expressed primarily in kidney, heart and transverse colon. Detected in adult lymph node, appendix, ascending colon, and in fetal heart and spleen.

It localises to the cytoplasm. Intracellular transport of retinol. This chain is Retinoid-binding protein 7 (RBP7), found in Homo sapiens (Human).